Reading from the N-terminus, the 427-residue chain is ATP-sensitive inward rectifier potassium channel 12 (427 aa).

The Cytoplasmic portion of the chain corresponds to 1–77 (MTASGRTNPY…LADMFTTCVD (77 aa)). Position 75 is an S-nitrosocysteine (Cys-75). The helical transmembrane segment at 78–104 (IRWRYMLLIFSLAFLASWLLFGVIFWV) threads the bilayer. The a 1,2-diacyl-sn-glycero-3-phospho-(1D-myo-inositol-4,5-bisphosphate) site is built by Arg-79 and Arg-81. The Extracellular portion of the chain corresponds to 105-129 (IAVAHGDLEPAEAHGRTPCVLQVHG). Residues Cys-123 and Cys-155 are joined by a disulfide bond. The segment at residues 130–146 (FMAAFLFSIETQTTIGY) is an intramembrane region (helical; Pore-forming). K(+) contacts are provided by Thr-143, Ile-144, Gly-145, and Tyr-146. The Selectivity filter signature appears at 143–148 (TIGYGL). Over 147–155 (GLRCVTEEC) the chain is Extracellular. A helical membrane pass occupies residues 156–183 (PVAVFMVVAQSIVGCIIDSFMIGAIMAK). Residues Lys-183 and Lys-188 each contribute to the a 1,2-diacyl-sn-glycero-3-phospho-(1D-myo-inositol-4,5-bisphosphate) site. Residues 184–427 (MARPKKRAQT…QRPYRRESEI (244 aa)) lie on the Cytoplasmic side of the membrane. The span at 387–396 (DEEDEVDGEQ) shows a compositional bias: acidic residues. The tract at residues 387 to 427 (DEEDEVDGEQDSLGPQARRDFDRPQAGTALEQRPYRRESEI) is disordered. A PDZ-binding motif is present at residues 425 to 427 (SEI).

The protein belongs to the inward rectifier-type potassium channel (TC 1.A.2.1) family. KCNJ12 subfamily. As to quaternary structure, homotetramer. Forms heteromer with KCNJ4. Association, via its PDZ-recognition domain, with LIN7A, LIN7B, LIN7C, DLG1, CASK and APBA1 plays a key role in its localization and trafficking.

It is found in the membrane. The enzyme catalyses K(+)(in) = K(+)(out). Its activity is regulated as follows. Activated by phosphatidylinositol 4,5-biphosphate (PtdIns(4,5)P2). PtdIns(4,5)P2 binding to the cytoplasmic side of the channel triggers a conformation change leading to channel opening. Functionally, inward rectifying potassium channel that probably participates in controlling the resting membrane potential in electrically excitable cells. Probably participates in establishing action potential waveform and excitability of neuronal and muscle tissues. Inward rectifier potassium channels are characterized by a greater tendency to allow potassium to flow into the cell rather than out of it. Their voltage dependence is regulated by the concentration of extracellular potassium; as external potassium is raised, the voltage range of the channel opening shifts to more positive voltages. The inward rectification is mainly due to the blockage of outward current by internal magnesium. This is ATP-sensitive inward rectifier potassium channel 12 (KCNJ12) from Bos taurus (Bovine).